Consider the following 183-residue polypeptide: Streptavidin-V2 (183 aa).

The N-terminal stretch at 1-24 is a signal peptide; that stretch reads MRKIVVAAIAVSLTTVGITASASA. The 123-residue stretch at 37–159 folds into the Avidin-like domain; that stretch reads AEAGITGTWY…GHDTFTKVKP (123 aa). Biotin-binding residues include Y67 and Y78. The short motif at 83–85 is the Cell attachment site; atypical element; it reads RYD. 3 residues coordinate biotin: W116, W132, and W144.

It belongs to the avidin/streptavidin family. Homotetramer.

It is found in the secreted. Functionally, the biological function of streptavidin is not known. Forms a strong non-covalent specific complex with biotin (one molecule of biotin per subunit of streptavidin). This chain is Streptavidin-V2, found in Streptomyces violaceus (Streptomyces venezuelae).